Reading from the N-terminus, the 458-residue chain is Monomethylamine methyltransferase MtmB1 (458 aa).

O202 is a non-standard amino acid (pyrrolysine).

The protein belongs to the monomethylamine methyltransferase family. Dimer of homotrimers. Can form a complex with MtmC (MtmC1 or MtmC2).

The enzyme catalyses Co(I)-[methylamine-specific corrinoid protein] + methylamine + H(+) = methyl-Co(III)-[methylamine-specific corrinoid protein] + NH4(+). It participates in one-carbon metabolism; methanogenesis from methylamine. Its function is as follows. Catalyzes the transfer of the methyl group from monomethylamine to the corrinoid cofactor of MtmC (MtmC1 or MtmC2). This is Monomethylamine methyltransferase MtmB1 (mtmB1) from Methanosarcina barkeri.